Reading from the N-terminus, the 182-residue chain is Isopentenyl-diphosphate Delta-isomerase (182 aa).

Mn(2+) contacts are provided by His25 and His32. The Nudix hydrolase domain occupies 30–164 (LLHLAFSSWL…PWAFSPWMVM (135 aa)). Residue Cys67 is part of the active site. Residue His69 participates in Mn(2+) binding. Glu87 is a binding site for Mg(2+). Mn(2+) is bound by residues Glu114 and Glu116. The active site involves Glu116.

The protein belongs to the IPP isomerase type 1 family. Homodimer. Mg(2+) serves as cofactor. It depends on Mn(2+) as a cofactor.

The protein localises to the cytoplasm. The enzyme catalyses isopentenyl diphosphate = dimethylallyl diphosphate. The protein operates within isoprenoid biosynthesis; dimethylallyl diphosphate biosynthesis; dimethylallyl diphosphate from isopentenyl diphosphate: step 1/1. In terms of biological role, catalyzes the 1,3-allylic rearrangement of the homoallylic substrate isopentenyl (IPP) to its highly electrophilic allylic isomer, dimethylallyl diphosphate (DMAPP). In Escherichia coli (strain ATCC 8739 / DSM 1576 / NBRC 3972 / NCIMB 8545 / WDCM 00012 / Crooks), this protein is Isopentenyl-diphosphate Delta-isomerase.